The primary structure comprises 273 residues: Shikimate dehydrogenase (NADP(+)) (273 aa).

Shikimate is bound by residues 15 to 17 (SKS) and T62. K66 (proton acceptor) is an active-site residue. E78 contacts NADP(+). Positions 87 and 103 each coordinate shikimate. Residues 127 to 131 (GAGGA), 151 to 156 (NRTHDK), and M214 contribute to the NADP(+) site. Y216 is a binding site for shikimate. G238 provides a ligand contact to NADP(+).

The protein belongs to the shikimate dehydrogenase family. As to quaternary structure, homodimer.

It carries out the reaction shikimate + NADP(+) = 3-dehydroshikimate + NADPH + H(+). Its pathway is metabolic intermediate biosynthesis; chorismate biosynthesis; chorismate from D-erythrose 4-phosphate and phosphoenolpyruvate: step 4/7. Its function is as follows. Involved in the biosynthesis of the chorismate, which leads to the biosynthesis of aromatic amino acids. Catalyzes the reversible NADPH linked reduction of 3-dehydroshikimate (DHSA) to yield shikimate (SA). This Shewanella denitrificans (strain OS217 / ATCC BAA-1090 / DSM 15013) protein is Shikimate dehydrogenase (NADP(+)).